The following is a 517-amino-acid chain: Zinc finger protein 215 (517 aa).

Positions 48–126 constitute an SCAN box domain; it reads RQKFRHFQYL…KDMVTLIEDV (79 aa). One can recognise a KRAB domain in the interval 164–237; it reads VTFKDVVVEF…EKEIPRKTIF (74 aa). C2H2-type zinc fingers lie at residues 379–401, 407–429, 462–484, and 490–512; these read YECY…QIIH, YKCS…QKLH, YQCV…QMIH, and FKCK…QKLH.

This sequence belongs to the krueppel C2H2-type zinc-finger protein family.

It localises to the nucleus. Its function is as follows. May be involved in transcriptional regulation. The polypeptide is Zinc finger protein 215 (ZNF215) (Homo sapiens (Human)).